The primary structure comprises 411 residues: Bifunctional protein GlmU (411 aa).

The pyrophosphorylase stretch occupies residues 1-204; it reads MDAIILCAGK…IGKLHGVELN (204 aa). UTP contacts are provided by residues 6–9, Q74, and G79; that span reads LCAG. N-acetyl-alpha-D-glucosamine 1-phosphate-binding residues include T80, G130, N142, and N158. Positions 205-224 are linker; it reads GYWNDIGHPWDVLSANSHFL. Residues 225–411 are N-acetyltransferase; sequence NKIISKISGK…DELVITKKRN (187 aa). H308 serves as the catalytic Proton acceptor. Acetyl-CoA is bound by residues A384 and K401.

The protein in the N-terminal section; belongs to the N-acetylglucosamine-1-phosphate uridyltransferase family. In the C-terminal section; belongs to the transferase hexapeptide repeat family.

The catalysed reaction is N-acetyl-alpha-D-glucosamine 1-phosphate + UTP + H(+) = UDP-N-acetyl-alpha-D-glucosamine + diphosphate. The enzyme catalyses alpha-D-glucosamine 1-phosphate + acetyl-CoA = N-acetyl-alpha-D-glucosamine 1-phosphate + CoA + H(+). The protein operates within nucleotide-sugar biosynthesis; UDP-N-acetyl-alpha-D-glucosamine biosynthesis; N-acetyl-alpha-D-glucosamine 1-phosphate from alpha-D-glucosamine 6-phosphate (route II): step 2/2. Its pathway is nucleotide-sugar biosynthesis; UDP-N-acetyl-alpha-D-glucosamine biosynthesis; UDP-N-acetyl-alpha-D-glucosamine from N-acetyl-alpha-D-glucosamine 1-phosphate: step 1/1. Its function is as follows. Catalyzes the last two sequential reactions in the de novo biosynthetic pathway for UDP-N-acetyl-glucosamine (UDP-GlcNAc). Responsible for the acetylation of GlcN-1-P to GlcNAc-1-P, and for the uridyl transfer from UTP to GlcNAc-1-P, to produce UDP-GlcNAc and pyrophosphate. This is Bifunctional protein GlmU from Methanococcus maripaludis (strain C5 / ATCC BAA-1333).